The primary structure comprises 554 residues: MLO-like protein 14 (554 aa).

Residues 1–13 (MREETEPSERTLG) are Extracellular-facing. A helical transmembrane segment spans residues 14–34 (LTPTWSVATVLTIFVFVSLIV). Residues 35–63 (ERSIHRLSNWLQKTKRKPLFAALEKMKEE) lie on the Cytoplasmic side of the membrane. A helical membrane pass occupies residues 64–84 (LMLLGFISLLLTATSSTIANI). Topologically, residues 85–158 (CVSSSFHNDR…SYEGMEQLHR (74 aa)) are extracellular. A helical membrane pass occupies residues 159-179 (FIFIMAVTHVTYSCLTMLLAI). Residues 180 to 281 (VKIHRWRIWE…MIRSMEEEFQ (102 aa)) are Cytoplasmic-facing. Residues 282 to 302 (KIVGVSGPLWGFVVGFMLFNI) traverse the membrane as a helical segment. Position 303 (Lys303) is a topological domain, extracellular. Residues 304–324 (GSNLYFWLAIIPITLVLLVGA) form a helical membrane-spanning segment. Residues 325–366 (KLQHVIATLALENASITEYASGIKLRPRDELFWFKKPELLLS) are Cytoplasmic-facing. A helical transmembrane segment spans residues 367-387 (LIHFIQFQNAFELASFFWFWW). Over 388 to 406 (QFGYNSCFLRNHLLVYLRL) the chain is Extracellular. A helical membrane pass occupies residues 407–427 (ILGFSGQFLCSYSTLPLYALV). The Cytoplasmic segment spans residues 428 to 554 (TQMGTNYKAA…SSSLPMRREC (127 aa)). Residues 441 to 462 (QRVRETINGWGKATRRKRRHGL) form a calmodulin-binding region.

Belongs to the MLO family.

The protein localises to the membrane. Its function is as follows. May be involved in modulation of pathogen defense and leaf cell death. Activity seems to be regulated by Ca(2+)-dependent calmodulin binding and seems not to require heterotrimeric G proteins. The chain is MLO-like protein 14 (MLO14) from Arabidopsis thaliana (Mouse-ear cress).